The sequence spans 66 residues: Large ribosomal subunit protein bL33 (66 aa).

This sequence belongs to the bacterial ribosomal protein bL33 family.

The sequence is that of Large ribosomal subunit protein bL33 from Wolbachia pipientis wMel.